The sequence spans 241 residues: ATP synthase subunit a (241 aa).

A run of 5 helical transmembrane segments spans residues 21 to 41 (LASILMVIITSLIVLVIAIAC), 84 to 104 (VTLILFIFVGNMLGLPFAIVI), 116 to 136 (DATVTLTLATMVILLTHYYGI), 183 to 203 (ILIGLLSSLIIGHAAWGWIIG), and 207 to 227 (LIAWQAFSIFIGTIQAYIFIM).

This sequence belongs to the ATPase A chain family. As to quaternary structure, F-type ATPases have 2 components, CF(1) - the catalytic core - and CF(0) - the membrane proton channel. CF(1) has five subunits: alpha(3), beta(3), gamma(1), delta(1), epsilon(1). CF(0) has three main subunits: a(1), b(2) and c(9-12). The alpha and beta chains form an alternating ring which encloses part of the gamma chain. CF(1) is attached to CF(0) by a central stalk formed by the gamma and epsilon chains, while a peripheral stalk is formed by the delta and b chains.

It localises to the cell membrane. Functionally, key component of the proton channel; it plays a direct role in the translocation of protons across the membrane. This Staphylococcus carnosus (strain TM300) protein is ATP synthase subunit a.